The primary structure comprises 942 residues: Valine--tRNA ligase (942 aa).

The 'HIGH' region motif lies at P43 to H53. A 'KMSKS' region motif is present at residues K551–S555. K554 contacts ATP. Residues E876 to L942 adopt a coiled-coil conformation.

Belongs to the class-I aminoacyl-tRNA synthetase family. ValS type 1 subfamily. Monomer.

It localises to the cytoplasm. The enzyme catalyses tRNA(Val) + L-valine + ATP = L-valyl-tRNA(Val) + AMP + diphosphate. Catalyzes the attachment of valine to tRNA(Val). As ValRS can inadvertently accommodate and process structurally similar amino acids such as threonine, to avoid such errors, it has a 'posttransfer' editing activity that hydrolyzes mischarged Thr-tRNA(Val) in a tRNA-dependent manner. The chain is Valine--tRNA ligase from Stenotrophomonas maltophilia (strain R551-3).